An 84-amino-acid chain; its full sequence is Small ribosomal subunit protein bS16 (84 aa).

This sequence belongs to the bacterial ribosomal protein bS16 family.

The sequence is that of Small ribosomal subunit protein bS16 from Ralstonia pickettii (strain 12J).